The primary structure comprises 251 residues: Imidazole glycerol phosphate synthase subunit HisF (251 aa).

Catalysis depends on residues Asp11 and Asp130.

This sequence belongs to the HisA/HisF family. As to quaternary structure, heterodimer of HisH and HisF.

The protein resides in the cytoplasm. It catalyses the reaction 5-[(5-phospho-1-deoxy-D-ribulos-1-ylimino)methylamino]-1-(5-phospho-beta-D-ribosyl)imidazole-4-carboxamide + L-glutamine = D-erythro-1-(imidazol-4-yl)glycerol 3-phosphate + 5-amino-1-(5-phospho-beta-D-ribosyl)imidazole-4-carboxamide + L-glutamate + H(+). It participates in amino-acid biosynthesis; L-histidine biosynthesis; L-histidine from 5-phospho-alpha-D-ribose 1-diphosphate: step 5/9. Functionally, IGPS catalyzes the conversion of PRFAR and glutamine to IGP, AICAR and glutamate. The HisF subunit catalyzes the cyclization activity that produces IGP and AICAR from PRFAR using the ammonia provided by the HisH subunit. This chain is Imidazole glycerol phosphate synthase subunit HisF, found in Listeria welshimeri serovar 6b (strain ATCC 35897 / DSM 20650 / CCUG 15529 / CIP 8149 / NCTC 11857 / SLCC 5334 / V8).